The chain runs to 734 residues: Protein arginine N-methyltransferase 5 (734 aa).

Over residues 1-16 (MSNRTYADNLFPQQVA) the composition is skewed to polar residues. The tract at residues 1 to 39 (MSNRTYADNLFPQQVAEQHEEQMSSGSSPKSNSPSRSIS) is disordered. The span at 24–39 (SSGSSPKSNSPSRSIS) shows a compositional bias: low complexity. Residues 42-329 (EAANSRIHIG…EYSQALRHAV (288 aa)) form a TIM barrel region. The SAM-dependent MTase PRMT-type domain occupies 360-706 (LQAPLQPLSE…VDNTGVWYEW (347 aa)). S-adenosyl-L-methionine is bound at residue tyrosine 376. Phenylalanine 379 is a binding site for a protein. S-adenosyl-L-methionine is bound by residues 385-386 (KY), glutamate 450, and 477-478 (DM). A protein is bound by residues glutamate 499 and glutamate 508. Catalysis depends on proton donor/acceptor residues glutamate 499 and glutamate 508. The tract at residues 529-734 (PQKYTSYVKP…PNGESYYMRM (206 aa)) is beta barrel. The interval 541 to 589 (STHIHQTIKAQSIPYLSRAIPSHGRGEPELDEDEMWIQKYPQGHVRNNM) is dimerization.

Belongs to the class I-like SAM-binding methyltransferase superfamily. Protein arginine N-methyltransferase family. In terms of assembly, homodimer. Interacts with cep-1 (via C-terminus domain); does not methylate cep-1. Interacts with cbp-1 (via N-terminus domain and HAT domain); the interaction results in methylation of cbp-1. Component of a complex that contains cep-1 and cbp-1. May interact with pid-2, pid-4 and pid-5.

It is found in the nucleus. The catalysed reaction is L-arginyl-[protein] + 2 S-adenosyl-L-methionine = N(omega),N(omega)'-dimethyl-L-arginyl-[protein] + 2 S-adenosyl-L-homocysteine + 2 H(+). Catalyzes the symmetrical dimethylation of arginine residues in targets such as small nuclear ribonucleoproteins, histone H2A/H4 and cbp-1. Dimethylation occurs in a distributive manner where the protein is released after the addition of the first methyl group prior to rebinding for the addition of the second methyl group. Plays a role in the negative regulation of DNA damage-induced apoptosis. By methylating cbp-1, may prevent apoptosis by repressing the capacity of cbp-1 to enhance cep-1 dependent transcription activation of the programmed cell death activator egl-1. Plays a role in heat and oxidative stress resistance. This Caenorhabditis elegans protein is Protein arginine N-methyltransferase 5.